The primary structure comprises 599 residues: Elongation factor 4 (599 aa).

Positions 2 to 184 constitute a tr-type G domain; sequence KNIRNFSIIA…RLVRDIPPPE (183 aa). GTP is bound by residues 14 to 19 and 131 to 134; these read DHGKST and NKID.

Belongs to the TRAFAC class translation factor GTPase superfamily. Classic translation factor GTPase family. LepA subfamily.

The protein localises to the cell inner membrane. It catalyses the reaction GTP + H2O = GDP + phosphate + H(+). Functionally, required for accurate and efficient protein synthesis under certain stress conditions. May act as a fidelity factor of the translation reaction, by catalyzing a one-codon backward translocation of tRNAs on improperly translocated ribosomes. Back-translocation proceeds from a post-translocation (POST) complex to a pre-translocation (PRE) complex, thus giving elongation factor G a second chance to translocate the tRNAs correctly. Binds to ribosomes in a GTP-dependent manner. This Shigella sonnei (strain Ss046) protein is Elongation factor 4.